A 372-amino-acid polypeptide reads, in one-letter code: Phospho-N-acetylmuramoyl-pentapeptide-transferase (372 aa).

Transmembrane regions (helical) follow at residues 25 to 45, 73 to 93, 98 to 118, 134 to 154, 176 to 196, 211 to 231, 251 to 271, 275 to 295, 300 to 320, and 349 to 369; these read RSLL…PVMI, TMGG…WADL, VWIV…DDWI, FFWT…IAQN, SIPL…YLVI, GLAI…AYLA, LVVI…YNAH, IFMG…IAVM, IVFA…FLQI, and QVVT…LMTL.

The protein belongs to the glycosyltransferase 4 family. MraY subfamily. The cofactor is Mg(2+).

Its subcellular location is the cell inner membrane. It catalyses the reaction UDP-N-acetyl-alpha-D-muramoyl-L-alanyl-gamma-D-glutamyl-meso-2,6-diaminopimeloyl-D-alanyl-D-alanine + di-trans,octa-cis-undecaprenyl phosphate = di-trans,octa-cis-undecaprenyl diphospho-N-acetyl-alpha-D-muramoyl-L-alanyl-D-glutamyl-meso-2,6-diaminopimeloyl-D-alanyl-D-alanine + UMP. It participates in cell wall biogenesis; peptidoglycan biosynthesis. Functionally, catalyzes the initial step of the lipid cycle reactions in the biosynthesis of the cell wall peptidoglycan: transfers peptidoglycan precursor phospho-MurNAc-pentapeptide from UDP-MurNAc-pentapeptide onto the lipid carrier undecaprenyl phosphate, yielding undecaprenyl-pyrophosphoryl-MurNAc-pentapeptide, known as lipid I. The polypeptide is Phospho-N-acetylmuramoyl-pentapeptide-transferase (Acinetobacter baylyi (strain ATCC 33305 / BD413 / ADP1)).